The following is a 309-amino-acid chain: MIIVTGGAGFIGSNIVRALNKIGYQDILVVDNLEKGAKFVNLVDLKIADYRDKDDFITSVRAKEVLGNIEAIFHLGACSSTMEWDGQFMMKNNYEYSKTLLHFCLKACIPFLYASSAAVYGGRTDCFIEEPQYEKPLNIYGYSKFLFDQYVRKIWPKARAPICGFRYFNVYGPRETHKGSMASVVFHLDKQIKAGKPPQLFLGSEQFKRDFIFVDDVAQINLWCWQNQISGIFNCGTGHAASFQTLADTVVAYHNSKPVQYVDFPENLKGCYQTFTQADITKLRTIGYDKPFKPLDEGVTHYLDWLNHQ.

NADP(+) is bound by residues 10-11 (FI), 31-32 (DN), lysine 38, lysine 53, 75-79 (LGACS), and asparagine 92. Residue tyrosine 140 is the Proton acceptor of the active site. Residue lysine 144 participates in NADP(+) binding. Asparagine 169 serves as a coordination point for substrate. Residues valine 170 and lysine 178 each contribute to the NADP(+) site. Lysine 178 serves as the catalytic Proton acceptor. Substrate contacts are provided by residues serine 180, histidine 187, 201–204 (FLGS), arginine 209, and tyrosine 272.

It belongs to the NAD(P)-dependent epimerase/dehydratase family. HldD subfamily. As to quaternary structure, homopentamer. NADP(+) is required as a cofactor.

It catalyses the reaction ADP-D-glycero-beta-D-manno-heptose = ADP-L-glycero-beta-D-manno-heptose. Its pathway is nucleotide-sugar biosynthesis; ADP-L-glycero-beta-D-manno-heptose biosynthesis; ADP-L-glycero-beta-D-manno-heptose from D-glycero-beta-D-manno-heptose 7-phosphate: step 4/4. Functionally, catalyzes the interconversion between ADP-D-glycero-beta-D-manno-heptose and ADP-L-glycero-beta-D-manno-heptose via an epimerization at carbon 6 of the heptose. This is ADP-L-glycero-D-manno-heptose-6-epimerase from Hamiltonella defensa subsp. Acyrthosiphon pisum (strain 5AT).